Consider the following 355-residue polypeptide: Peptide chain release factor 1 (355 aa).

Glutamine 231 is subject to N5-methylglutamine. The segment covering 281-291 (ERLAKESEARK) has biased composition (basic and acidic residues). The interval 281 to 302 (ERLAKESEARKSQVGSGDRSER) is disordered.

The protein belongs to the prokaryotic/mitochondrial release factor family. Post-translationally, methylated by PrmC. Methylation increases the termination efficiency of RF1.

It is found in the cytoplasm. In terms of biological role, peptide chain release factor 1 directs the termination of translation in response to the peptide chain termination codons UAG and UAA. The polypeptide is Peptide chain release factor 1 (Campylobacter jejuni subsp. doylei (strain ATCC BAA-1458 / RM4099 / 269.97)).